Reading from the N-terminus, the 429-residue chain is Histidine--tRNA ligase (429 aa).

The protein belongs to the class-II aminoacyl-tRNA synthetase family. Homodimer.

The protein localises to the cytoplasm. The catalysed reaction is tRNA(His) + L-histidine + ATP = L-histidyl-tRNA(His) + AMP + diphosphate + H(+). This Rippkaea orientalis (strain PCC 8801 / RF-1) (Cyanothece sp. (strain PCC 8801)) protein is Histidine--tRNA ligase.